The chain runs to 344 residues: N-acetyl-gamma-glutamyl-phosphate reductase (344 aa).

Cysteine 150 is an active-site residue.

This sequence belongs to the NAGSA dehydrogenase family. Type 1 subfamily.

The protein resides in the cytoplasm. The catalysed reaction is N-acetyl-L-glutamate 5-semialdehyde + phosphate + NADP(+) = N-acetyl-L-glutamyl 5-phosphate + NADPH + H(+). The protein operates within amino-acid biosynthesis; L-arginine biosynthesis; N(2)-acetyl-L-ornithine from L-glutamate: step 3/4. Functionally, catalyzes the NADPH-dependent reduction of N-acetyl-5-glutamyl phosphate to yield N-acetyl-L-glutamate 5-semialdehyde. The protein is N-acetyl-gamma-glutamyl-phosphate reductase of Azotobacter vinelandii (strain DJ / ATCC BAA-1303).